A 178-amino-acid polypeptide reads, in one-letter code: uncharacterized protein (178 aa).

This sequence belongs to the tail fiber family.

This is an uncharacterized protein from Escherichia coli (strain K12).